Reading from the N-terminus, the 757-residue chain is MWFLPAALPLLPLLLLLGQAPPSRPQSLGTMKLRLVGPGSGPEEGRLEVLHQGQWGTVCDDDFALQEATVACRQLGFEGALTWAHSAKYGSGEGPIWLDNVHCVGTESSLDQCGSNGWGVSDCTHSEDVGVVCNPQRHRGSVSERVSNALGPQDRRLEEVRLKPILASAKRQSPVTEGAVEVKYEGHWRQVCDQGWTRNNSRVVCGMLGFPSEAPVDSHHYRKVWDSKMKDPNSRLKSLTKKNSFWIHRVNCLGTEPHMANCQVQVAPAQGKLRPACPGGMHAVVSCVAGPRFRPPKAKPGRKESRAEEMKVRLRSGAQVGEGRVEVLMNRQWGTVCDHGWNLISASVVCRQLGFGSAREALFGAQLGQALGPIHLSEVRCRGYERTLSDCPSLEGSQNGCQHDNDAAVRCNIPNMGFQDQVRLAGGRSPEEGVVEVQVEVNGVQRWGAVCSDHWGLSEAMVACRQLGLGFASHAIKDTWYWQGTPGAREVVMSGVHCSGTELALQQCQRHGPVHCSHGTGRFSAGVSCTDSAPDLVMNAQLVQETAYLEDRPLSLLYCAHEENCLSQSADRMDWPYGHRRLLRFSSQIHNLGRADFRPKMGRHGWIWHQCHRHYHSIEVFTHYDLLTLNGSKVAEGHKASFCLEDTNCPTGMQRRYACANFGEQGVTVGCWDTYRHDIDCQWVDITDVGPGDYIFQVVVNPKFEVAESDFSNNMMRCRCKYDGQRVWLHNCHTGDSYRANTELSQEQEQRLRNNLI.

The signal sequence occupies residues 1–25 (MWFLPAALPLLPLLLLLGQAPPSRP). 4 SRCR domains span residues 33 to 134 (LRLV…VVCN), 160 to 288 (VRLK…VSCV), 312 to 412 (VRLR…VRCN), and 422 to 530 (VRLA…VSCT). Disulfide bonds link Cys59-Cys123, Cys72-Cys133, Cys103-Cys113, Cys192-Cys277, Cys205-Cys287, Cys252-Cys262, Cys337-Cys401, Cys350-Cys411, Cys381-Cys391, Cys451-Cys516, Cys464-Cys529, Cys498-Cys508, Cys559-Cys565, Cys611-Cys659, Cys643-Cys649, Cys671-Cys681, and Cys718-Cys732. A glycan (N-linked (GlcNAc...) asparagine) is linked at Asn199. Residues 534 to 737 (PDLVMNAQLV…WLHNCHTGDS (204 aa)) form a lysyl-oxidase like region. 3 residues coordinate Cu cation: His612, His614, and His616. An N-linked (GlcNAc...) asparagine glycan is attached at Asn630. The lysine tyrosylquinone (Lys-Tyr) cross-link spans 639-675 (KASFCLEDTNCPTGMQRRYACANFGEQGVTVGCWDTY). Residue Tyr675 is modified to 2',4',5'-topaquinone.

It belongs to the lysyl oxidase family. The cofactor is Cu cation. Lysine tyrosylquinone residue is required as a cofactor. In terms of processing, the lysine tyrosylquinone cross-link (LTQ) is generated by condensation of the epsilon-amino group of a lysine with a topaquinone produced by oxidation of tyrosine. May be proteolytically cleaved by BMP1.

The protein localises to the secreted. Its subcellular location is the extracellular space. The enzyme catalyses L-lysyl-[protein] + O2 + H2O = (S)-2-amino-6-oxohexanoyl-[protein] + H2O2 + NH4(+). Its function is as follows. Catalyzes the oxidative deamination of lysine and hydroxylysine residues in collagen and elastin, resulting in the formation of covalent cross-linkages, and the stabilization of collagen and elastin fibers. The sequence is that of Lysyl oxidase homolog 4 (LOXL4) from Bos taurus (Bovine).